Here is a 383-residue protein sequence, read N- to C-terminus: D-aspartate oxidase 3 (383 aa).

Residues 1 to 17 form the signal peptide; the sequence is MLYALLLLFGGVSTVSS. Residues lysine 56 and serine 63 each contribute to the FAD site. N-linked (GlcNAc...) asparagine glycosylation is found at asparagine 152, asparagine 271, and asparagine 320. Threonine 339 contacts FAD. Asparagine 371 carries an N-linked (GlcNAc...) asparagine glycan.

This sequence belongs to the DAMOX/DASOX family. FAD is required as a cofactor. In terms of tissue distribution, in both sexes, present in coelomocytes (at protein level). Expressed in hypodermal cells and the proximal gonadal sheath cells in adult hermaphrodites (at protein level). Also expressed in probable head mesodermal cells and unidentified cells in the head, and vulval muscles in adult hermaphrodites. Expressed in the seminal vesicle, spicule and tail cells in adult males (at protein level).

The protein localises to the secreted. The enzyme catalyses D-aspartate + O2 + H2O = oxaloacetate + H2O2 + NH4(+). It carries out the reaction D-glutamate + O2 + H2O = H2O2 + 2-oxoglutarate + NH4(+). In terms of biological role, selectively catalyzes the oxidative deamination of acidic amino acids. Plays a role in the egg-laying events and maturation processes of the reproductive organs. The sequence is that of D-aspartate oxidase 3 (ddo-3) from Caenorhabditis elegans.